A 440-amino-acid chain; its full sequence is Xaa-Pro dipeptidase (440 aa).

Asp244, Asp255, His335, Glu380, and Glu419 together coordinate Mn(2+).

The protein belongs to the peptidase M24B family. Bacterial-type prolidase subfamily. Mn(2+) is required as a cofactor.

It carries out the reaction Xaa-L-Pro dipeptide + H2O = an L-alpha-amino acid + L-proline. Its function is as follows. Splits dipeptides with a prolyl residue in the C-terminal position. This chain is Xaa-Pro dipeptidase, found in Shewanella denitrificans (strain OS217 / ATCC BAA-1090 / DSM 15013).